Consider the following 345-residue polypeptide: D-erythrose-4-phosphate dehydrogenase (345 aa).

11 to 12 (RI) lines the NAD(+) pocket. Substrate-binding positions include 158-160 (SCT), Arg204, 217-218 (TK), and Arg240. The Nucleophile role is filled by Cys159. Position 322 (Asn322) interacts with NAD(+).

It belongs to the glyceraldehyde-3-phosphate dehydrogenase family. Epd subfamily. Homotetramer.

The protein resides in the cytoplasm. It carries out the reaction D-erythrose 4-phosphate + NAD(+) + H2O = 4-phospho-D-erythronate + NADH + 2 H(+). The protein operates within cofactor biosynthesis; pyridoxine 5'-phosphate biosynthesis; pyridoxine 5'-phosphate from D-erythrose 4-phosphate: step 1/5. In terms of biological role, catalyzes the NAD-dependent conversion of D-erythrose 4-phosphate to 4-phosphoerythronate. In Vibrio parahaemolyticus serotype O3:K6 (strain RIMD 2210633), this protein is D-erythrose-4-phosphate dehydrogenase.